A 110-amino-acid polypeptide reads, in one-letter code: UPF0145 protein (110 aa).

The protein belongs to the UPF0145 family.

The protein is UPF0145 protein of Listeria welshimeri.